The following is a 229-amino-acid chain: Imidazoleglycerol-phosphate dehydratase (229 aa).

Belongs to the imidazoleglycerol-phosphate dehydratase family.

The enzyme catalyses D-erythro-1-(imidazol-4-yl)glycerol 3-phosphate = 3-(imidazol-4-yl)-2-oxopropyl phosphate + H2O. It functions in the pathway amino-acid biosynthesis; L-histidine biosynthesis; L-histidine from 5-phospho-alpha-D-ribose 1-diphosphate: step 6/9. This Neurospora crassa (strain ATCC 24698 / 74-OR23-1A / CBS 708.71 / DSM 1257 / FGSC 987) protein is Imidazoleglycerol-phosphate dehydratase.